We begin with the raw amino-acid sequence, 382 residues long: Probable trehalose-phosphate phosphatase 2 (382 aa).

This sequence belongs to the trehalose phosphatase family. A divalent metal cation serves as cofactor. As to expression, expressed in roots and shoots.

It carries out the reaction alpha,alpha-trehalose 6-phosphate + H2O = alpha,alpha-trehalose + phosphate. It functions in the pathway glycan biosynthesis; trehalose biosynthesis. Removes the phosphate from trehalose 6-phosphate to produce free trehalose. Trehalose accumulation in plant may improve abiotic stress tolerance. The protein is Probable trehalose-phosphate phosphatase 2 (TPP2) of Oryza sativa subsp. japonica (Rice).